A 361-amino-acid polypeptide reads, in one-letter code: Arginine N(omega)-methyltransferase (361 aa).

Residues 1-17 (MRHVQEARAVPAEHEAR) are compositionally biased toward basic and acidic residues. Residues 1–24 (MRHVQEARAVPAEHEARPAPVTMP) are disordered. One can recognise an SAM-dependent MTase PRMT-type domain in the interval 65–361 (DADAFAQIAR…WSDFTLRVSI (297 aa)).

This sequence belongs to the class I-like SAM-binding methyltransferase superfamily. Protein arginine N-methyltransferase family.

It carries out the reaction L-arginine + S-adenosyl-L-methionine = N(omega)-methyl-L-arginine + S-adenosyl-L-homocysteine + H(+). It functions in the pathway antibiotic biosynthesis. Involved in the biosynthesis of the glucosamine-nitrosourea antibiotic streptozotocin (SZN). Catalyzes the conversion of L-arginine to N(omega)-methyl-L-arginine (L-NMA), using S-adenosyl-L-methionine (SAM) as a methyl donor. The polypeptide is Arginine N(omega)-methyltransferase (Streptomyces achromogenes subsp. streptozoticus).